We begin with the raw amino-acid sequence, 163 residues long: Late embryogenesis abundant protein Dc3 (163 aa).

Disordered stretches follow at residues 1–117 (MASH…GGLM) and 139–163 (FGMA…ARTE). 3 stretches are compositionally biased toward basic and acidic residues: residues 28–56 (TMKD…ESKD), 67–84 (GAVK…KEKT), and 91–113 (TKEK…KEKT). 6 consecutive repeat copies span residues 32–42 (KAQAAKDKASE), 43–53 (MAGSARDRTVE), 65–75 (KAGAVKDKTCE), 76–86 (TAQAAKEKTGG), 87–97 (AMQATKEKASE), and 103–115 (KETA…KTGG). The segment at 32 to 115 (KAQAAKDKAS…AVAGKEKTGG (84 aa)) is 6 X 11 AA approximate repeats. Residues 152-163 (TTRVTRSSARTE) show a composition bias toward low complexity.

It belongs to the LEA type 4 family.

This Daucus carota (Wild carrot) protein is Late embryogenesis abundant protein Dc3.